An 883-amino-acid polypeptide reads, in one-letter code: EEF1AKMT4-ECE2 readthrough transcript protein (883 aa).

The methyltransferase-like region stretch occupies residues 1-160 (MASPGAGRAP…VHTVDQVLSE (160 aa)). Residues 1 to 178 (MASPGAGRAP…QLLGSRTQLE (178 aa)) lie on the Cytoplasmic side of the membrane. 2 residues coordinate S-adenosyl-L-methionine: W26 and Y30. A Phosphotyrosine modification is found at Y39. S-adenosyl-L-methionine contacts are provided by residues W41, G66, 88–89 (DY), 113–114 (DV), and K130. The chain crosses the membrane as a helical span at residues 179–199 (LVLAGASLLLAALLLGCLVAL). Residues 200–883 (GVQYHRDPSH…MNPGQLCEVW (684 aa)) lie on the Lumenal side of the membrane. Positions 211–883 (TCLTEACIRV…MNPGQLCEVW (673 aa)) constitute a Peptidase M13 domain. 5 cysteine pairs are disulfide-bonded: C212/C217, C235/C868, C243/C828, C299/C548, and C757/C880. N-linked (GlcNAc...) asparagine glycans are attached at residues N279, N283, N324, N384, N429, N496, and N652. Zn(2+) is bound at residue H720. Residue E721 is part of the active site. H724 is a Zn(2+) binding site. Residues N745 and N753 are each glycosylated (N-linked (GlcNAc...) asparagine). Zn(2+) is bound at residue E780. The Proton donor role is filled by D784.

In the N-terminal section; belongs to the methyltransferase superfamily. The protein in the C-terminal section; belongs to the peptidase M13 family. Zn(2+) is required as a cofactor.

It is found in the golgi apparatus membrane. Its subcellular location is the cytoplasmic vesicle. The protein resides in the secretory vesicle membrane. It carries out the reaction Hydrolysis of the 21-Trp-|-Val-22 bond in big endothelin to form endothelin 1.. Its activity is regulated as follows. Inhibited by phosphoramidon. Its function is as follows. Converts big endothelin-1 to endothelin-1. May also have methyltransferase activity. May play a role in amyloid-beta processing. In Homo sapiens (Human), this protein is EEF1AKMT4-ECE2 readthrough transcript protein.